The primary structure comprises 466 residues: Arginine biosynthesis bifunctional protein ArgJ, mitochondrial (466 aa).

Positions 194, 223, 234, 321, 461, and 466 each coordinate substrate. Thr234 (nucleophile) is an active-site residue.

The protein belongs to the ArgJ family. Heterodimer of an alpha and a beta chain. The alpha and beta chains are autoproteolytically processed from a single precursor protein within the mitochondrion.

The protein localises to the mitochondrion matrix. The enzyme catalyses N(2)-acetyl-L-ornithine + L-glutamate = N-acetyl-L-glutamate + L-ornithine. The catalysed reaction is L-glutamate + acetyl-CoA = N-acetyl-L-glutamate + CoA + H(+). It participates in amino-acid biosynthesis; L-arginine biosynthesis; L-ornithine and N-acetyl-L-glutamate from L-glutamate and N(2)-acetyl-L-ornithine (cyclic): step 1/1. Its pathway is amino-acid biosynthesis; L-arginine biosynthesis; N(2)-acetyl-L-ornithine from L-glutamate: step 1/4. Catalyzes two activities which are involved in the cyclic version of arginine biosynthesis: the synthesis of acetylglutamate from glutamate and acetyl-CoA, and of ornithine by transacetylation between acetylornithine and glutamate. This is Arginine biosynthesis bifunctional protein ArgJ, mitochondrial from Aspergillus flavus (strain ATCC 200026 / FGSC A1120 / IAM 13836 / NRRL 3357 / JCM 12722 / SRRC 167).